A 327-amino-acid chain; its full sequence is Tetraacyldisaccharide 4'-kinase (327 aa).

Residue 52–59 (TAGGAGKT) coordinates ATP.

The protein belongs to the LpxK family.

The catalysed reaction is a lipid A disaccharide + ATP = a lipid IVA + ADP + H(+). The protein operates within glycolipid biosynthesis; lipid IV(A) biosynthesis; lipid IV(A) from (3R)-3-hydroxytetradecanoyl-[acyl-carrier-protein] and UDP-N-acetyl-alpha-D-glucosamine: step 6/6. Its function is as follows. Transfers the gamma-phosphate of ATP to the 4'-position of a tetraacyldisaccharide 1-phosphate intermediate (termed DS-1-P) to form tetraacyldisaccharide 1,4'-bis-phosphate (lipid IVA). In Gluconacetobacter diazotrophicus (strain ATCC 49037 / DSM 5601 / CCUG 37298 / CIP 103539 / LMG 7603 / PAl5), this protein is Tetraacyldisaccharide 4'-kinase.